The following is a 254-amino-acid chain: Phosphoribosylaminoimidazole-succinocarboxamide synthase (254 aa).

The protein belongs to the SAICAR synthetase family.

It catalyses the reaction 5-amino-1-(5-phospho-D-ribosyl)imidazole-4-carboxylate + L-aspartate + ATP = (2S)-2-[5-amino-1-(5-phospho-beta-D-ribosyl)imidazole-4-carboxamido]succinate + ADP + phosphate + 2 H(+). It functions in the pathway purine metabolism; IMP biosynthesis via de novo pathway; 5-amino-1-(5-phospho-D-ribosyl)imidazole-4-carboxamide from 5-amino-1-(5-phospho-D-ribosyl)imidazole-4-carboxylate: step 1/2. The sequence is that of Phosphoribosylaminoimidazole-succinocarboxamide synthase from Sinorhizobium fredii (strain NBRC 101917 / NGR234).